A 446-amino-acid polypeptide reads, in one-letter code: RUN domain-containing protein 3A (446 aa).

The interval 1–298 is interaction with RAP2A; it reads MEASFVQTTM…LQLQLEEAAA (298 aa). The region spanning 52–189 is the RUN domain; sequence DDSSEEFVNF…IDFSFCLKGE (138 aa). Thr215 is subject to Phosphothreonine. The tract at residues 216–239 is disordered; the sequence is DEEERHSAESSTSEDNSPEHPYLP. The residue at position 232 (Ser232) is a Phosphoserine. Residues 267 to 322 adopt a coiled-coil conformation; the sequence is YLEELVRLRESQLKDLEAENRRLQLQLEEAAAQNQREKRELEGVILELQEQLTGLI. The span at 372-384 shows a compositional bias: polar residues; it reads PLSAEASLSSDSQ. Residues 372 to 404 form a disordered region; sequence PLSAEASLSSDSQRLGEGTRDEEPWGPIGKDPT. A phosphoserine mark is found at Ser416 and Ser419.

Belongs to the RUNDC3 family. Interacts with the GTP-bound form of RAP2A.

May act as an effector of RAP2A in neuronal cells. This Homo sapiens (Human) protein is RUN domain-containing protein 3A (RUNDC3A).